The following is a 481-amino-acid chain: Proline--tRNA ligase 2 (481 aa).

The protein belongs to the class-II aminoacyl-tRNA synthetase family. ProS type 3 subfamily. Homodimer.

The protein resides in the cytoplasm. The enzyme catalyses tRNA(Pro) + L-proline + ATP = L-prolyl-tRNA(Pro) + AMP + diphosphate. Catalyzes the attachment of proline to tRNA(Pro) in a two-step reaction: proline is first activated by ATP to form Pro-AMP and then transferred to the acceptor end of tRNA(Pro). This chain is Proline--tRNA ligase 2, found in Clostridioides difficile (strain 630) (Peptoclostridium difficile).